Reading from the N-terminus, the 179-residue chain is ATP-dependent protease subunit HslV (179 aa).

Residue threonine 7 is part of the active site. Residues glycine 162, cysteine 165, and threonine 168 each coordinate Na(+).

Belongs to the peptidase T1B family. HslV subfamily. In terms of assembly, a double ring-shaped homohexamer of HslV is capped on each side by a ring-shaped HslU homohexamer. The assembly of the HslU/HslV complex is dependent on binding of ATP.

The protein resides in the cytoplasm. It carries out the reaction ATP-dependent cleavage of peptide bonds with broad specificity.. With respect to regulation, allosterically activated by HslU binding. In terms of biological role, protease subunit of a proteasome-like degradation complex believed to be a general protein degrading machinery. This chain is ATP-dependent protease subunit HslV, found in Bordetella bronchiseptica (strain ATCC BAA-588 / NCTC 13252 / RB50) (Alcaligenes bronchisepticus).